The following is a 394-amino-acid chain: MFSESLPEDKPVLEVALTELPMVAESLPEDGSGLEVTCDLRLEHKPARTLLLVGRSGNGKSATGNSILGRKAFKSKGRASGVTTACELQSSTLPNGQIINVIDTPGLFSLSPSTEFTCREILRCFSLTKEGIDAVLLVFSLKNRLTEEEKSALFALKILFGSKIVDYMIVVFTNEDSLEDDGDTFEEYLEDSPDFKEILEPCNDRKVLFRNRSNAPVSQKAKQVQELLNYVEEIARLNGKSYMADLSHEIRENETAFQIKQQEILEMKGLYTRQEMLQMKKDMEKSFENQQLRQMMERVETELRETKERLEQQLKEEKSARLELEKRAKEVEKRSSDVVKELNDEQAKRLESESRAKEAVKQSNGVVENLNKELARIKQMATDLQKSKQWCIIM.

Positions 45–251 constitute an AIG1-type G domain; the sequence is KPARTLLLVG…YMADLSHEIR (207 aa). Positions 54 to 61 are G1; sequence GRSGNGKS. GTP-binding positions include 54 to 62 and S75; that span reads GRSGNGKSA. The G2 stretch occupies residues 81 to 85; it reads GVTTA. Residues 103-106 form a G3 region; sequence DTPG. The interval 173–176 is G4; sequence TNED. The segment at 210–212 is G5; that stretch reads RNR. GTP is bound at residue N211. Residues 289–387 adopt a coiled-coil conformation; the sequence is NQQLRQMMER…KQMATDLQKS (99 aa).

This sequence belongs to the TRAFAC class TrmE-Era-EngA-EngB-Septin-like GTPase superfamily. AIG1/Toc34/Toc159-like paraseptin GTPase family. IAN subfamily.

The chain is Immune-associated nucleotide-binding protein 12 from Arabidopsis thaliana (Mouse-ear cress).